The chain runs to 2803 residues: Microtubule-associated protein 1A (2803 aa).

5 positions are modified to phosphoserine: S114, S117, S118, S121, and S155. Y177 is subject to Phosphotyrosine. Disordered stretches follow at residues 302 to 466 (GAVP…DLKP) and 486 to 516 (IDRS…PLPT). 3 positions are modified to phosphoserine: S319, S322, and S384. Residues 335–390 (AKREEVVEEGAKEARSELAKELAKTEKKAKESSEKPPEKPAKPERVKTESSEALKA) are compositionally biased toward basic and acidic residues. Residues 391–406 (EKRKLIKDKVGKKHLK) are compositionally biased toward basic residues. 2 stretches are compositionally biased toward basic and acidic residues: residues 407–464 (EKIS…KPDL) and 486–499 (IDRS…KELS). 8 repeat units span residues 415-417 (KKD), 420-422 (KKE), 427-429 (RKE), 431-433 (KKD), 436-438 (RKE), 440-442 (KKD), 444-446 (KKE), and 449-451 (RKD). The tract at residues 415–541 (KKDKEKKEIK…TQDFEEMKRE (127 aa)) is 9 X 3 AA repeats of K-K-[DE]. A Phosphothreonine modification is found at T504. 2 positions are modified to phosphoserine: S526 and S527. Copy 9 of the repeat occupies 539–541 (KRE). Composition is skewed to basic and acidic residues over residues 539 to 554 (KREE…DTGL) and 585 to 596 (QEEHVMKEKELV). Disordered stretches follow at residues 539–712 (KREE…KAPE), 734–806 (YIQD…GTPE), 847–1080 (EDQS…VNID), 1109–1548 (TGPI…EKKD), and 1573–1605 (EENH…EKVK). Phosphoserine occurs at positions 605 and 612. A Phosphothreonine modification is found at T616. The segment covering 623 to 667 (WEEKKQREAERLPDRTEAREESEPEVKEDVIEKAELEEMEEVHPS) has biased composition (basic and acidic residues). 3 positions are modified to phosphoserine: S644, S667, and S787. 2 stretches are compositionally biased toward polar residues: residues 847–860 (EDQS…PQTE) and 871–883 (TVTS…TEAT). Phosphoserine is present on residues S874, S877, S878, and S891. T894 bears the Phosphothreonine mark. Phosphoserine is present on residues S896, S900, S909, S986, S996, S1004, S1013, S1019, and S1029. Positions 1031 to 1065 (GDTKRTPGVGKEDAAEETVKPGPEEGTLEKEEKVP) are enriched in basic and acidic residues. Phosphoserine is present on residues S1069, S1144, S1146, S1160, S1172, S1190, S1200, S1203, S1209, S1218, S1221, and S1264. The segment covering 1131 to 1146 (KPQKDEVLRYPDRSLS) has biased composition (basic and acidic residues). Residues 1154-1169 (SVLSVPSPDTANQEPT) show a composition bias toward polar residues. Composition is skewed to polar residues over residues 1211–1224 (DVSS…SLGT) and 1264–1278 (SPPT…AQTD). Residues 1289–1299 (PASSFSHSTPS) show a composition bias toward low complexity. Phosphoserine occurs at positions 1326, 1329, 1544, 1600, and 1626. Basic and acidic residues-rich tracts occupy residues 1338–1548 (IAIK…EKKD) and 1586–1605 (QEDK…EKVK). A compositionally biased stretch (basic and acidic residues) spans 1632-1642 (RAREQEEKYWR). 3 disordered regions span residues 1632–1684 (RARE…RYWR), 1713–1879 (DGQG…FSWG), and 1892–2673 (EGAA…LVNG). S1654 is modified (phosphoserine). Positions 1655–1666 (PTREEPAGEQKE) are enriched in basic and acidic residues. A phosphoserine mark is found at S1675, S1749, S1762, S1776, S1791, S1797, S1801, S1812, and S1818. Residues 1852–1867 (LPPAPLSPAPGPPTPA) are compositionally biased toward pro residues. Residues 1907–1929 (KDYRKAEGEREEEGRAEAPDKSS) show a composition bias toward basic and acidic residues. Residue S1931 is modified to Phosphoserine. Residues 1951 to 1964 (PEQREPTPYPDERS) are compositionally biased toward basic and acidic residues. T1957 carries the post-translational modification Phosphothreonine. Over residues 2019 to 2033 (SPISPKSLQSDTPTF) the composition is skewed to polar residues. S2022 is modified (phosphoserine). The segment covering 2042 to 2066 (TVPPRPEPGPSMEPSLTPPAVPPRA) has biased composition (pro residues). T2058 is subject to Phosphothreonine. 4 positions are modified to phosphoserine: S2074, S2104, S2106, and S2108. Residues 2086 to 2122 (PDRRSPSPKESGRSHWDDSTSDSELEKGAREQPEKEA) are compositionally biased toward basic and acidic residues. Residues 2175–2184 (PAPPQLPSPA) are compositionally biased toward pro residues. S2235, S2252, S2256, S2259, and S2260 each carry phosphoserine. Polar residues predominate over residues 2257–2268 (EGSSSEATTPVI). Low complexity predominate over residues 2312 to 2325 (ASLDLALAPAPSLP). At S2449 the chain carries Phosphoserine. Basic and acidic residues predominate over residues 2461-2473 (IDDRDLSTEEVRL). Residues 2502 to 2514 (SASDSGSSQSDSD) show a composition bias toward low complexity. The segment covering 2559-2575 (DPPPLPQPDPRPSPPRP) has biased composition (pro residues). Over residues 2590 to 2602 (GRVERLREKEKVQ) the composition is skewed to basic and acidic residues. Phosphoserine is present on residues S2649 and S2664.

The protein belongs to the MAP1 family. 3 different light chains, LC1 (a cleavage product of MAP1B), LC2 (a cleavage product of MAP1A) and LC3 (produced by one of the MAP1LC3 genes), can associate with the MAP1A or MAP1B heavy chains. Interacts with TIAM2. Interacts with guanylate kinase-like domain of DLG1, DLG2 and DLG4. Binds to CSNK1D. In terms of assembly, interacts with ELAVL4. Post-translationally, phosphorylated by CSNK1D. LC2 is generated from MAP1A by proteolytic processing. In terms of tissue distribution, brain.

It is found in the cytoplasm. The protein resides in the cytoskeleton. Structural protein involved in the filamentous cross-bridging between microtubules and other skeletal elements. This is Microtubule-associated protein 1A (MAP1A) from Homo sapiens (Human).